Here is a 101-residue protein sequence, read N- to C-terminus: Small ribosomal subunit protein uS14 (101 aa).

Belongs to the universal ribosomal protein uS14 family. As to quaternary structure, part of the 30S ribosomal subunit. Contacts proteins S3 and S10.

Its function is as follows. Binds 16S rRNA, required for the assembly of 30S particles and may also be responsible for determining the conformation of the 16S rRNA at the A site. The chain is Small ribosomal subunit protein uS14 from Citrobacter koseri (strain ATCC BAA-895 / CDC 4225-83 / SGSC4696).